The following is an 88-amino-acid chain: Putative septation protein SpoVG (88 aa).

It belongs to the SpoVG family.

Could be involved in septation. This chain is Putative septation protein SpoVG, found in Lachnospira eligens (strain ATCC 27750 / DSM 3376 / VPI C15-48 / C15-B4) (Eubacterium eligens).